We begin with the raw amino-acid sequence, 336 residues long: Phosphate acyltransferase (336 aa).

The protein belongs to the PlsX family. In terms of assembly, homodimer. Probably interacts with PlsY.

It is found in the cytoplasm. It catalyses the reaction a fatty acyl-[ACP] + phosphate = an acyl phosphate + holo-[ACP]. The protein operates within lipid metabolism; phospholipid metabolism. Its function is as follows. Catalyzes the reversible formation of acyl-phosphate (acyl-PO(4)) from acyl-[acyl-carrier-protein] (acyl-ACP). This enzyme utilizes acyl-ACP as fatty acyl donor, but not acyl-CoA. The chain is Phosphate acyltransferase from Ectopseudomonas mendocina (strain ymp) (Pseudomonas mendocina).